Reading from the N-terminus, the 357-residue chain is NADH-quinone oxidoreductase subunit H (357 aa).

The next 8 membrane-spanning stretches (helical) occupy residues 18–38, 92–112, 127–147, 165–185, 206–226, 268–288, 294–314, and 329–349; these read VAWM…PIIL, VLFV…WAVV, LLYI…AGWA, VSYE…SGSL, FLSW…ISAV, ILLS…PIDI, IPGW…FVWF, and LGWK…AIWM.

Belongs to the complex I subunit 1 family. As to quaternary structure, NDH-1 is composed of 14 different subunits. Subunits NuoA, H, J, K, L, M, N constitute the membrane sector of the complex.

It is found in the cell inner membrane. It catalyses the reaction a quinone + NADH + 5 H(+)(in) = a quinol + NAD(+) + 4 H(+)(out). Its function is as follows. NDH-1 shuttles electrons from NADH, via FMN and iron-sulfur (Fe-S) centers, to quinones in the respiratory chain. The immediate electron acceptor for the enzyme in this species is believed to be ubiquinone. Couples the redox reaction to proton translocation (for every two electrons transferred, four hydrogen ions are translocated across the cytoplasmic membrane), and thus conserves the redox energy in a proton gradient. This subunit may bind ubiquinone. This is NADH-quinone oxidoreductase subunit H from Bordetella bronchiseptica (strain ATCC BAA-588 / NCTC 13252 / RB50) (Alcaligenes bronchisepticus).